Consider the following 165-residue polypeptide: 2-C-methyl-D-erythritol 2,4-cyclodiphosphate synthase (165 aa).

Positions 8 and 10 each coordinate a divalent metal cation. Residues 8-10 (DVH) and 34-35 (HS) each bind 4-CDP-2-C-methyl-D-erythritol 2-phosphate. H42 contributes to the a divalent metal cation binding site. Residues 56–58 (DIG), 61–65 (FPDTD), 132–135 (TTTE), F139, and R142 contribute to the 4-CDP-2-C-methyl-D-erythritol 2-phosphate site.

The protein belongs to the IspF family. As to quaternary structure, homotrimer. A divalent metal cation serves as cofactor.

The catalysed reaction is 4-CDP-2-C-methyl-D-erythritol 2-phosphate = 2-C-methyl-D-erythritol 2,4-cyclic diphosphate + CMP. It participates in isoprenoid biosynthesis; isopentenyl diphosphate biosynthesis via DXP pathway; isopentenyl diphosphate from 1-deoxy-D-xylulose 5-phosphate: step 4/6. Its function is as follows. Involved in the biosynthesis of isopentenyl diphosphate (IPP) and dimethylallyl diphosphate (DMAPP), two major building blocks of isoprenoid compounds. Catalyzes the conversion of 4-diphosphocytidyl-2-C-methyl-D-erythritol 2-phosphate (CDP-ME2P) to 2-C-methyl-D-erythritol 2,4-cyclodiphosphate (ME-CPP) with a corresponding release of cytidine 5-monophosphate (CMP). The polypeptide is 2-C-methyl-D-erythritol 2,4-cyclodiphosphate synthase (Halothermothrix orenii (strain H 168 / OCM 544 / DSM 9562)).